The primary structure comprises 429 residues: Glutamate-1-semialdehyde 2,1-aminomutase (429 aa).

Lysine 267 is subject to N6-(pyridoxal phosphate)lysine.

Belongs to the class-III pyridoxal-phosphate-dependent aminotransferase family. HemL subfamily. As to quaternary structure, homodimer. Pyridoxal 5'-phosphate serves as cofactor.

The protein resides in the cytoplasm. It catalyses the reaction (S)-4-amino-5-oxopentanoate = 5-aminolevulinate. The protein operates within porphyrin-containing compound metabolism; protoporphyrin-IX biosynthesis; 5-aminolevulinate from L-glutamyl-tRNA(Glu): step 2/2. The sequence is that of Glutamate-1-semialdehyde 2,1-aminomutase from Xanthomonas axonopodis pv. citri (strain 306).